We begin with the raw amino-acid sequence, 465 residues long: ATP synthase subunit beta (465 aa).

Position 152 to 159 (152 to 159) interacts with ATP; it reads GGAGVGKT.

This sequence belongs to the ATPase alpha/beta chains family. F-type ATPases have 2 components, CF(1) - the catalytic core - and CF(0) - the membrane proton channel. CF(1) has five subunits: alpha(3), beta(3), gamma(1), delta(1), epsilon(1). CF(0) has three main subunits: a(1), b(2) and c(9-12). The alpha and beta chains form an alternating ring which encloses part of the gamma chain. CF(1) is attached to CF(0) by a central stalk formed by the gamma and epsilon chains, while a peripheral stalk is formed by the delta and b chains.

It is found in the cell inner membrane. It carries out the reaction ATP + H2O + 4 H(+)(in) = ADP + phosphate + 5 H(+)(out). Its function is as follows. Produces ATP from ADP in the presence of a proton gradient across the membrane. The catalytic sites are hosted primarily by the beta subunits. This Campylobacter hominis (strain ATCC BAA-381 / DSM 21671 / CCUG 45161 / LMG 19568 / NCTC 13146 / CH001A) protein is ATP synthase subunit beta.